The sequence spans 512 residues: Maturase K (512 aa).

This sequence belongs to the intron maturase 2 family. MatK subfamily.

The protein resides in the plastid. Its subcellular location is the chloroplast. In terms of biological role, usually encoded in the trnK tRNA gene intron. Probably assists in splicing its own and other chloroplast group II introns. The polypeptide is Maturase K (Amorphophallus paeoniifolius (Whitespot giant arum)).